The following is a 177-amino-acid chain: dCTP deaminase, dUMP-forming (177 aa).

Residues 95–100, aspartate 112, 120–122, glutamine 141, tyrosine 155, and glutamine 162 each bind dCTP; these read RSSLGR and TLE. Catalysis depends on glutamate 122, which acts as the Proton donor/acceptor.

It belongs to the dCTP deaminase family. Homotrimer.

It catalyses the reaction dCTP + 2 H2O = dUMP + NH4(+) + diphosphate. It functions in the pathway pyrimidine metabolism; dUMP biosynthesis; dUMP from dCTP: step 1/1. Its function is as follows. Bifunctional enzyme that catalyzes both the deamination of dCTP to dUTP and the hydrolysis of dUTP to dUMP without releasing the toxic dUTP intermediate. This is dCTP deaminase, dUMP-forming from Hydrogenobaculum sp. (strain Y04AAS1).